The primary structure comprises 493 residues: Transcript termination protein OPG145 (493 aa).

The region spanning 100 to 256 (MIKLKRPLYI…NSIINIAKLS (157 aa)) is the Helicase ATP-binding domain. 113–120 (LACGFGKT) provides a ligand contact to ATP. Positions 206–209 (DESH) match the DESH box motif.

The protein belongs to the helicase family. Poxviruses subfamily. In terms of assembly, interacts with OPG087. Might be part of a transcription complex composed at least of OPG087, OPG110, and OPG145.

Its subcellular location is the virion. Functionally, DNA helicase which seems to act as a postreplicative transcription termination factor. Involved in ATP-dependent release of nascent RNA. Forms a stable complex with single-stranded DNA, and to a lesser extent RNA. The polypeptide is Transcript termination protein OPG145 (OPG145) (Variola virus (isolate Human/India/Ind3/1967) (VARV)).